Reading from the N-terminus, the 1004-residue chain is Importin subunit beta-5 (1004 aa).

At M1 the chain carries N-acetylmethionine. The Importin N-terminal domain occupies 21–100 (AETQLLQWCD…REVLLKLCLN (80 aa)).

The protein belongs to the importin beta family. In terms of assembly, interacts with NAP1.

The protein resides in the cytoplasm. Its subcellular location is the nucleus. It localises to the nuclear pore complex. In terms of biological role, required for nuclear protein import and mediates docking of import substrate to distinct nucleoporins. Serves a receptor for nuclear localization signals. Mediates the nuclear import of TATA-binding protein (TBP) and of histones H2A and H2B. The chain is Importin subunit beta-5 (KAP114) from Saccharomyces cerevisiae (strain ATCC 204508 / S288c) (Baker's yeast).